Here is a 343-residue protein sequence, read N- to C-terminus: E3 ubiquitin-protein ligase RNF113A (343 aa).

Ala-2 carries the post-translational modification N-acetylalanine. The tract at residues 2–60 is important for interaction with SNRNP200/BRR2; that stretch reads AEQLSPGKAVDQVCTFLFKKPGRKGAAGRRKRPACDPEPGESGSSSDEGCTVVRPEKKR. Ser-6 is subject to Phosphoserine. A compositionally biased stretch (basic residues) spans 22-33; the sequence is PGRKGAAGRRKR. The disordered stretch occupies residues 22–96; the sequence is PGRKGAAGRR…EEEENEPESL (75 aa). The segment covering 41–50 has biased composition (low complexity); sequence GESGSSSDEG. The tract at residues 50 to 61 is important for interaction with CXCR4; sequence GCTVVRPEKKRV. Phosphoserine occurs at positions 84 and 85. The segment covering 84–93 has biased composition (acidic residues); the sequence is SSEEEEENEP. The C3H1-type zinc-finger motif lies at 196–224; it reads DYQPDICKDYKETGFCGFGDSCKFLHDRS. Residue Ser-253 is modified to Phosphoserine. Residues 262–300 form an RING-type zinc finger; it reads CFICRQSFQNPVVTKCRHYFCESCALQHFRTTPRCYVCD. Residues 322-343 are disordered; it reads ATGEGGASDLPEDPDEDAIPIT. Positions 331–343 are enriched in acidic residues; the sequence is LPEDPDEDAIPIT.

As to quaternary structure, component of pre-catalytic and catalytic spliceosome complexes. Interacts (via N-terminus) with the spliceosome subunit SNRNP200/BRR2. Component of the minor spliceosome, which splices U12-type introns. Within this complex, interacts with SCNM1 and CRIPT. Ubiquitous.

Its subcellular location is the nucleus. The protein localises to the nucleus speckle. It carries out the reaction S-ubiquitinyl-[E2 ubiquitin-conjugating enzyme]-L-cysteine + [acceptor protein]-L-lysine = [E2 ubiquitin-conjugating enzyme]-L-cysteine + N(6)-ubiquitinyl-[acceptor protein]-L-lysine.. Its pathway is protein modification; protein ubiquitination. Its function is as follows. Required for pre-mRNA splicing as component of the spliceosome. As a component of the minor spliceosome, involved in the splicing of U12-type introns in pre-mRNAs. E3 ubiquitin-protein ligase that catalyzes the transfer of ubiquitin onto target proteins. Catalyzes polyubiquitination of SNRNP200/BRR2 with non-canonical 'Lys-63'-linked polyubiquitin chains. Plays a role in DNA repair via its role in the synthesis of 'Lys-63'-linked polyubiquitin chains that recruit ALKBH3 and the ASCC complex to sites of DNA damage by alkylating agents. Ubiquitinates CXCR4, leading to its degradation, and thereby contributes to the termination of CXCR4 signaling. This is E3 ubiquitin-protein ligase RNF113A (RNF113A) from Homo sapiens (Human).